We begin with the raw amino-acid sequence, 255 residues long: Defective in cullin neddylation protein 1 (255 aa).

A UBA-like domain is found at glutamine 6 to tyrosine 43. The DCUN1 domain maps to glutamine 54–lysine 250.

Its function is as follows. May contribute to neddylation of cullin components of SCF-type E3 ubiquitin ligase complexes. Neddylation of cullins play an essential role in the regulation of SCF-type complexes activity. This Eremothecium gossypii (strain ATCC 10895 / CBS 109.51 / FGSC 9923 / NRRL Y-1056) (Yeast) protein is Defective in cullin neddylation protein 1 (DCN1).